A 316-amino-acid polypeptide reads, in one-letter code: Ribonuclease Z (316 aa).

Zn(2+) contacts are provided by histidine 59, histidine 61, aspartate 63, histidine 64, histidine 135, aspartate 203, and histidine 261. Aspartate 63 functions as the Proton acceptor in the catalytic mechanism.

It belongs to the RNase Z family. As to quaternary structure, homodimer. Requires Zn(2+) as cofactor.

It catalyses the reaction Endonucleolytic cleavage of RNA, removing extra 3' nucleotides from tRNA precursor, generating 3' termini of tRNAs. A 3'-hydroxy group is left at the tRNA terminus and a 5'-phosphoryl group is left at the trailer molecule.. Its function is as follows. Zinc phosphodiesterase, which displays some tRNA 3'-processing endonuclease activity. Probably involved in tRNA maturation, by removing a 3'-trailer from precursor tRNA. This chain is Ribonuclease Z, found in Nanoarchaeum equitans (strain Kin4-M).